We begin with the raw amino-acid sequence, 314 residues long: 2-oxo-3-(phosphooxy)propyl 3-oxoalkanoate synthase (314 aa).

Belongs to the AfsA family.

The enzyme catalyses a medium-chain 3-oxoacyl-[ACP] + dihydroxyacetone phosphate = a (4-alkanoyl-5-oxo-2,5-dihydrofuran-3-yl)methyl phosphate + holo-[ACP] + H2O. Functionally, involved of the biosynthesis of S.coelicolor butanolide 1 (SCB1), a gamma-butyrolactone that triggers antibiotic production. The polypeptide is 2-oxo-3-(phosphooxy)propyl 3-oxoalkanoate synthase (Streptomyces coelicolor (strain ATCC BAA-471 / A3(2) / M145)).